The primary structure comprises 598 residues: DNA polymerase alpha subunit B (598 aa).

Over residues 112-140 the composition is skewed to polar residues; sequence SYTTPSKGSQKRAISTPETPLTKRSVSTR. The segment at 112 to 167 is disordered; that stretch reads SYTTPSKGSQKRAISTPETPLTKRSVSTRSPHQLLSPSSFSPSATPSQKYNSRSNR. S126 is subject to Phosphoserine. Residues T127 and T130 each carry the phosphothreonine modification. Phosphoserine occurs at positions 141, 147, 152, and 154. Positions 141–158 are enriched in low complexity; sequence SPHQLLSPSSFSPSATPS.

Belongs to the DNA polymerase alpha subunit B family. Component of the alpha DNA polymerase complex (also known as the alpha DNA polymerase-primase complex) consisting of four subunits: the catalytic subunit POLA1, the regulatory subunit POLA2, and primase complex subunits PRIM1 and PRIM2 respectively. Within the complex, POLA1 directly interacts with PRIM2/p58. Post-translationally, phosphorylated in a cell cycle-dependent manner, in G2/M phase.

It is found in the nucleus. Accessory subunit of the DNA polymerase alpha complex (also known as the alpha DNA polymerase-primase complex) which plays an essential role in the initiation of DNA synthesis. During the S phase of the cell cycle, the DNA polymerase alpha complex (composed of a catalytic subunit POLA1, an accessory subunit POLA2 and two primase subunits, the catalytic subunit PRIM1 and the regulatory subunit PRIM2) is recruited to DNA at the replicative forks via direct interactions with MCM10 and WDHD1. The primase subunit of the polymerase alpha complex initiates DNA synthesis by oligomerising short RNA primers on both leading and lagging strands. These primers are initially extended by the polymerase alpha catalytic subunit and subsequently transferred to polymerase delta and polymerase epsilon for processive synthesis on the lagging and leading strand, respectively. In Homo sapiens (Human), this protein is DNA polymerase alpha subunit B (POLA2).